A 290-amino-acid polypeptide reads, in one-letter code: Expansin-A26 (290 aa).

Positions 1–29 (MDTTTTMAPLPLLTTTSLLLFFFLASSFA) are cleaved as a signal peptide. The tract at residues 45 to 67 (DGGGDGEGGGGGDGEGGGGGGGA) is disordered. Positions 101-196 (GGACGYKDAD…RKVACVRQGG (96 aa)) constitute an Expansin-like EG45 domain. The region spanning 206-286 (SYNMVMVKNV…DWTYDNTYQA (81 aa)) is the Expansin-like CBD domain. N-linked (GlcNAc...) asparagine glycosylation occurs at asparagine 250.

This sequence belongs to the expansin family. Expansin A subfamily. In terms of tissue distribution, expressed in flowers.

It localises to the secreted. Its subcellular location is the cell wall. It is found in the membrane. In terms of biological role, may cause loosening and extension of plant cell walls by disrupting non-covalent bonding between cellulose microfibrils and matrix glucans. No enzymatic activity has been found. May be required for rapid internodal elongation in deepwater rice during submergence. In Oryza sativa subsp. japonica (Rice), this protein is Expansin-A26 (EXPA26).